The following is a 1850-amino-acid chain: Vitellogenin-2 (1850 aa).

Residues 1–15 form the signal peptide; it reads MRGIILALVLTLVGS. A Vitellogenin domain is found at 24–662; the sequence is FNSRRSYLYN…SPRTMFPSAI (639 aa). Residue Asn604 is glycosylated (N-linked (GlcNAc...) asparagine). A disordered region spans residues 935–984; it reads DAPLDVTEEPFQTSERASREHFAMQGPDSMPRKQSHSSREDLRRSTGKRA. An N-linked (GlcNAc...) asparagine glycan is attached at Asn1094. Disordered stretches follow at residues 1115–1313 and 1338–1362; these read GTEP…SSSS and EFPK…SHDT. Low complexity predominate over residues 1122-1143; that stretch reads TSSSSSSASSTATSSSSSSASS. A compositionally biased stretch (basic and acidic residues) spans 1156 to 1165; sequence DQVKQARNKD. Over residues 1167-1266 the composition is skewed to low complexity; it reads SSSSRSSKSS…SRSSSSSSKS (100 aa). Asn1177 and Asn1188 each carry an N-linked (GlcNAc...) asparagine glycan. The segment covering 1267 to 1277 has biased composition (basic residues); that stretch reads SSHHSHSHHSG. Residues 1278–1291 show a composition bias toward low complexity; that stretch reads HLNGSSSSSSSSRS. N-linked (GlcNAc...) asparagine glycosylation is present at Asn1280. A compositionally biased stretch (basic and acidic residues) spans 1338-1350; it reads EFPKRKLPGDRAT. Residues Asn1417, Asn1597, and Asn1665 are each glycosylated (N-linked (GlcNAc...) asparagine). The 178-residue stretch at 1579–1756 folds into the VWFD domain; sequence ARCSVSYNKI…SWILEEAPCR (178 aa). Cystine bridges form between Cys1581–Cys1719 and Cys1604–Cys1755.

Post-translationally, phosvitin, an egg yolk storage protein, is one of the most highly phosphorylated (10%) proteins in nature. Cathepsin D is responsible for intraoocytic processing of vitellogenin. In terms of processing, may contain intrachain disulfide bonds. As to expression, after incorporation from serum via a specific receptor, it is cleaved into four fragments, heavy and light chain lipovitellins, phosphovitin and YGP40, and YGP40 is released into the yolk plasma before or during compartmentation of lipovitellin-phosvitin complex into the yolk granule.

Its function is as follows. Precursor of the major egg-yolk proteins that are sources of nutrients during early development of oviparous organisms. In terms of biological role, phosvitin is believed to be of importance in sequestering calcium, iron and other cations for the developing embryo. In Gallus gallus (Chicken), this protein is Vitellogenin-2 (VTG2).